The chain runs to 130 residues: Large ribosomal subunit protein bL12 (130 aa).

The protein belongs to the bacterial ribosomal protein bL12 family. Homodimer. Part of the ribosomal stalk of the 50S ribosomal subunit. Forms a multimeric L10(L12)X complex, where L10 forms an elongated spine to which 2 to 4 L12 dimers bind in a sequential fashion. Binds GTP-bound translation factors.

Functionally, forms part of the ribosomal stalk which helps the ribosome interact with GTP-bound translation factors. Is thus essential for accurate translation. This Mycolicibacterium paratuberculosis (strain ATCC BAA-968 / K-10) (Mycobacterium paratuberculosis) protein is Large ribosomal subunit protein bL12.